We begin with the raw amino-acid sequence, 251 residues long: Retinoic acid early-inducible protein 1-epsilon (251 aa).

Residues Met1–Gly28 form the signal peptide. An intrachain disulfide couples Cys37 to Cys56. 5 N-linked (GlcNAc...) asparagine glycosylation sites follow: Asn38, Asn70, Asn83, Asn141, and Asn154. Cys88 and Cys188 form a disulfide bridge. The interval Leu196–Thr228 is disordered. The segment covering Ser209–Ser219 has biased composition (low complexity). Ser225 carries GPI-anchor amidated serine lipidation. A propeptide spans His226–Met251 (removed in mature form).

It belongs to the NKG2D ligand family. Post-translationally, glycosylated.

Its subcellular location is the cell membrane. Acts as a ligand for KLRK1. The protein is Retinoic acid early-inducible protein 1-epsilon (Raet1e) of Mus musculus (Mouse).